The primary structure comprises 75 residues: Exodeoxyribonuclease 7 small subunit (75 aa).

This sequence belongs to the XseB family. As to quaternary structure, heterooligomer composed of large and small subunits.

The protein resides in the cytoplasm. The enzyme catalyses Exonucleolytic cleavage in either 5'- to 3'- or 3'- to 5'-direction to yield nucleoside 5'-phosphates.. Bidirectionally degrades single-stranded DNA into large acid-insoluble oligonucleotides, which are then degraded further into small acid-soluble oligonucleotides. This is Exodeoxyribonuclease 7 small subunit from Thermotoga maritima (strain ATCC 43589 / DSM 3109 / JCM 10099 / NBRC 100826 / MSB8).